The sequence spans 829 residues: Periplasmic nitrate reductase (829 aa).

The segment at residues 1–30 is a signal peptide (tat-type signal); it reads MKMTRRAFVKANAAASAAAVAGITLPASAA. A 4Fe-4S Mo/W bis-MGD-type domain is found at 41-97; it reads ITWDKAPCRFCGTGCSVLVGTQNGKVVATQGDPEAPVNKGLNCIKGYFLSKIMYGQD. Residues cysteine 48, cysteine 51, cysteine 55, and cysteine 83 each coordinate [4Fe-4S] cluster. Mo-bis(molybdopterin guanine dinucleotide) is bound by residues lysine 85, glutamine 152, asparagine 177, cysteine 181, 214–221, 245–249, 264–266, methionine 374, glutamine 378, asparagine 484, 510–511, lysine 533, aspartate 560, and 718–727; these read WGSNMAEM, STYYH, QSD, SD, and TGRVLEHWHT. Phenylalanine 794 lines the substrate pocket. Residues asparagine 802 and lysine 819 each contribute to the Mo-bis(molybdopterin guanine dinucleotide) site.

This sequence belongs to the prokaryotic molybdopterin-containing oxidoreductase family. NasA/NapA/NarB subfamily. Component of the periplasmic nitrate reductase NapAB complex composed of NapA and NapB. It depends on [4Fe-4S] cluster as a cofactor. Mo-bis(molybdopterin guanine dinucleotide) serves as cofactor. Predicted to be exported by the Tat system. The position of the signal peptide cleavage has not been experimentally proven.

It localises to the periplasm. It catalyses the reaction 2 Fe(II)-[cytochrome] + nitrate + 2 H(+) = 2 Fe(III)-[cytochrome] + nitrite + H2O. In terms of biological role, catalytic subunit of the periplasmic nitrate reductase complex NapAB. Receives electrons from NapB and catalyzes the reduction of nitrate to nitrite. This chain is Periplasmic nitrate reductase, found in Vibrio vulnificus (strain CMCP6).